Here is a 364-residue protein sequence, read N- to C-terminus: NADH-quinone oxidoreductase subunit H (364 aa).

The next 8 membrane-spanning stretches (helical) occupy residues 15–35 (LLVL…IAFL), 84–104 (AVFI…WAAI), 123–143 (VGVL…IMGG), 169–189 (IGFV…TTIV), 206–226 (YFPL…SALA), 257–277 (LFML…TILF), 302–322 (LSGL…FALV), and 341–361 (IFLP…TFVG).

Belongs to the complex I subunit 1 family. NDH-1 is composed of 14 different subunits. Subunits NuoA, H, J, K, L, M, N constitute the membrane sector of the complex.

It is found in the cell inner membrane. The catalysed reaction is a quinone + NADH + 5 H(+)(in) = a quinol + NAD(+) + 4 H(+)(out). NDH-1 shuttles electrons from NADH, via FMN and iron-sulfur (Fe-S) centers, to quinones in the respiratory chain. The immediate electron acceptor for the enzyme in this species is believed to be ubiquinone. Couples the redox reaction to proton translocation (for every two electrons transferred, four hydrogen ions are translocated across the cytoplasmic membrane), and thus conserves the redox energy in a proton gradient. This subunit may bind ubiquinone. In Hyphomonas neptunium (strain ATCC 15444), this protein is NADH-quinone oxidoreductase subunit H.